Here is a 777-residue protein sequence, read N- to C-terminus: MTATSPAPFSPQEIAAEGIKPEEYAEIVRRLGRHPNKAELGMFGVMWSEHCCYKNSRPLLKQFPTTGPRILVGPGENAGVVDLGEGLQLAFKIESHNHPSAVEPFQGAATGVGGILRDIFTMGARPIALLNSLRFGSLEDPKTQRLFSGVVAGISHYGNCVGVPTVGGEVYFDPAYSGNPLVNVMALGLMETPEIVKSGASGIGNPVLYVGSTTGRDGMGGASFASAELSDESIDDRPAVQVGDPFLEKSLIEACLEAFKTGAVVAAQDMGAAGITCSTSEMAAKGGVGIELDLDKIPVRETGMIPYEYLLSESQERMLFVAHKGREQELIDIFHRWGLQAVVAGTVIAEPIVRILFQGAIAAEIPADALAENTPLYERELLAEPPEYARQAWEWSSDSLPTCTTAGIEIQGNLQSWQEILLTLLNTPTIASKNWVYRQYDHQVQNNTVFLPGGADAAVVRLRPLEGQGKITNTLSGVAATVDCNPRYVYLDPYEGAKAVVAEAARNLSCVGAEPLAVTDNLNFGSPEKPIGYWQLSEACRGLAEGCRELATPVTGGNVSLYNETLDPQGNPQPIYPTPVVGMVGLITDLTKICGQGWQTPGDVIYLLGASITTLGASEYLATIHDTVAGRPPRVDFDLERRVQKVCREGIYADWVRSAHDCAEGGLVVALAESCLAGNLGAEIHLDASGSQLQRLDEVLFGEGGARILVSVASTQQENWESYLQEHLGQNWQKLGIVGNTDADLAVLTTDNQSLIRVSIEEMNDRYQNAIARRLAL.

H50 is an active-site residue. 2 residues coordinate ATP: Y53 and K92. Residue E94 coordinates Mg(2+). Substrate-binding positions include 95–98 (SHNH) and R117. Catalysis depends on H96, which acts as the Proton acceptor. Position 118 (D118) interacts with Mg(2+). Residue Q241 participates in substrate binding. D269 contributes to the Mg(2+) binding site. 313–315 (ESQ) is a substrate binding site. ATP-binding residues include D520 and G557. N558 serves as a coordination point for Mg(2+). S560 lines the substrate pocket.

This sequence belongs to the FGAMS family. Monomer. Part of the FGAM synthase complex composed of 1 PurL, 1 PurQ and 2 PurS subunits.

Its subcellular location is the cytoplasm. The catalysed reaction is N(2)-formyl-N(1)-(5-phospho-beta-D-ribosyl)glycinamide + L-glutamine + ATP + H2O = 2-formamido-N(1)-(5-O-phospho-beta-D-ribosyl)acetamidine + L-glutamate + ADP + phosphate + H(+). It functions in the pathway purine metabolism; IMP biosynthesis via de novo pathway; 5-amino-1-(5-phospho-D-ribosyl)imidazole from N(2)-formyl-N(1)-(5-phospho-D-ribosyl)glycinamide: step 1/2. Its function is as follows. Part of the phosphoribosylformylglycinamidine synthase complex involved in the purines biosynthetic pathway. Catalyzes the ATP-dependent conversion of formylglycinamide ribonucleotide (FGAR) and glutamine to yield formylglycinamidine ribonucleotide (FGAM) and glutamate. The FGAM synthase complex is composed of three subunits. PurQ produces an ammonia molecule by converting glutamine to glutamate. PurL transfers the ammonia molecule to FGAR to form FGAM in an ATP-dependent manner. PurS interacts with PurQ and PurL and is thought to assist in the transfer of the ammonia molecule from PurQ to PurL. This chain is Phosphoribosylformylglycinamidine synthase subunit PurL, found in Trichormus variabilis (strain ATCC 29413 / PCC 7937) (Anabaena variabilis).